Consider the following 1167-residue polypeptide: MRLSTIKLSGFKSFVDPTTLHLPTNMTGIVGPNGCGKSNIIDAVRWVMGESSASRLRGDSLTDVIFSGSSARKPVSQATVELIFDNSDHTISGEFASFNEISVKRLVSRDGNSAYYLNGTKCRRRDITDLFLGTGLGPRSYSIIEQGMISQIIEARPEDLRVYLEEAAGISKYKERRKETETRIRHTRENLDRLGDLREEITKQLAHLQRQARQAEQYQALQEERRIKDAEWKALEYRGLDGQLQGLREKLNQEETRLQQFIAEQRDAEARIETGRVRREESAEAVAKAQADVYQVGGALARIEQQIQHQRELSHRLHKARDEAQSQLQELTQHISGDSAKLSVLREAVAAAEPQLEQLREDHEFRQESLREAEARLADWQQRWETHNRDTGEASRAGEVERTRVDYLDRQALEADRRREALVNERAGLDLDALAEAFEQIELRHETQKTSLDGLTEQVEARKHALGGLQEQQRASQGELAEVRKQAQAARGRLSSLETLQQAALGQEQGAAVAWLKSRGLDSAARVGERISVQSGWENAVEGALGQLIEGVLVDAPEQLVDALGELGDGRIALVSSATDNANFAPTSLAAKVQGPIAIRRLLARLHTAEDLDAARTLQRSLPEGDSVITRNGERLGEGWVRVSRSGAAKQGALLRERQIQELRTQIETLQEREAELEHQLASFREQLLAAEQQREDAQRQLYMAHRSVSELAGQLQSQQGKVDAARTRIERIETDLSQLLETLDTSREQAREARAKLEDAVTLMGDLQGTREALESERRQLTDARDQARDAARGVRDAMHALALTLESQRTQIASLSQTLERMDSQRGQLDTRLEDLVAQLSEGDSPVETLEHEHQAALSERVRTERALGEARTLLDSIDSELRSFEQTRQQRDEQALAQRERISQRKLDQQALVLSAEQLSAAVVKAGFVLEDVVNGLPESANPAEWEATVGQIDGRMRRLEPVNLAAIQEYGEAAQRSEYLDAQNLDLNTALETLEEAIRKIDRETRGRFKDTFDRVNSGVQALYPRLFGGGHAYLELTGEDLLDTGVTIMARPPGKRVSSISLLSGGEKAMTAVALVFAIFQLNPAPFCLLDEVDAPLDEANVGRLANMVREMSEKVQFLFVSHNKATMEAARQLSGVTMREPGVSRLVSVDLEEAARLAGAA.

32 to 39 (PNGCGKSN) serves as a coordination point for ATP. Coiled coils occupy residues 170–274 (ISKY…RIET), 310–390 (QREL…HNRD), 468–500 (GLQE…LETL), 653–870 (ALLR…ERAL), and 982–1011 (EYLD…ETRG).

This sequence belongs to the SMC family. In terms of assembly, homodimer.

The protein resides in the cytoplasm. Functionally, required for chromosome condensation and partitioning. The protein is Chromosome partition protein Smc of Xanthomonas oryzae pv. oryzae (strain KACC10331 / KXO85).